Reading from the N-terminus, the 369-residue chain is Protein FAM187B (369 aa).

The signal sequence occupies residues 1-17 (MPPMLWLLLNFAAPALG). Residues 18 to 333 (FYFSISCPSG…PGRADSVLKG (316 aa)) lie on the Extracellular side of the membrane. Residues N45, N68, and N130 are each glycosylated (N-linked (GlcNAc...) asparagine). Residues 334–354 (LKLVLLVGTVLVLLGALLKFI) traverse the membrane as a helical segment. Residues 355–369 (RPSPGKRSKQVLMVK) lie on the Cytoplasmic side of the membrane.

This sequence belongs to the FAM187 family.

The protein localises to the membrane. This is Protein FAM187B (FAM187B) from Macaca fascicularis (Crab-eating macaque).